The following is a 455-amino-acid chain: MKVTQEKLPDSQIGLEIEISAEASKKAYETKVNTLARTANIPGFRKGKVPRQILLQRIGTEYIKATTLQELIEDSLKAAIKQESLESIGDFELKSKFDELVQQFKPGEPLTFSAAIDVPPTVTLGDYQSLSVKAEETVYNPEKLENWFKERQEQQATLVPVEDRKAEMGDVAIVDYEGYFAPEEGEETERKPIPGVQGQDFRVDLTEGRFIQGMVEGIVGMQPEETQEITVTFPSDYPREDLAGQVAIFKITVKELKAKELPELDDDFAEEVSEFATIAELRESLEKQFTEEAQEATKKSIHDAMITQLLEICPVDLPNTLIEDEVTQVLTQTAMQMEQMGIDIRQLFVKENIPKLRENARPDAISRLKQSLILQEIAKVESITPEASLVEERINKIKEQLSERDVDFDKLEQMVTEELTMEAILNWLQEKATVELVPEGTLKPAEDQEAESQEE.

A PPIase FKBP-type domain is found at 169–262 (GDVAIVDYEG…VKELKAKELP (94 aa)).

The protein belongs to the FKBP-type PPIase family. Tig subfamily.

It localises to the cytoplasm. It catalyses the reaction [protein]-peptidylproline (omega=180) = [protein]-peptidylproline (omega=0). In terms of biological role, involved in protein export. Acts as a chaperone by maintaining the newly synthesized protein in an open conformation. Functions as a peptidyl-prolyl cis-trans isomerase. The sequence is that of Trigger factor from Rippkaea orientalis (strain PCC 8801 / RF-1) (Cyanothece sp. (strain PCC 8801)).